A 443-amino-acid chain; its full sequence is Xaa-Pro dipeptidase (443 aa).

Residues Asp246, Asp257, His339, Glu384, and Glu423 each contribute to the Mn(2+) site.

The protein belongs to the peptidase M24B family. Bacterial-type prolidase subfamily. It depends on Mn(2+) as a cofactor.

It catalyses the reaction Xaa-L-Pro dipeptide + H2O = an L-alpha-amino acid + L-proline. In terms of biological role, splits dipeptides with a prolyl residue in the C-terminal position. The chain is Xaa-Pro dipeptidase from Pectobacterium atrosepticum (strain SCRI 1043 / ATCC BAA-672) (Erwinia carotovora subsp. atroseptica).